The following is a 562-amino-acid chain: Potassium-transporting ATPase potassium-binding subunit (562 aa).

A run of 12 helical transmembrane segments spans residues 6–26, 62–82, 132–152, 175–195, 253–273, 283–303, 327–347, 356–376, 379–399, 416–436, 483–503, and 526–546; these read FLLI…LGGF, YALA…VLLM, GLTV…FALI, LYVL…QGVL, FVQM…FGQV, LIWA…YAEL, FGIL…CGAV, ALGG…FGGV, GLYG…LMIG, MTAL…ALAL, LLLA…VLAI, and LFIG…FIPA.

It belongs to the KdpA family. The system is composed of three essential subunits: KdpA, KdpB and KdpC.

The protein resides in the cell inner membrane. Its function is as follows. Part of the high-affinity ATP-driven potassium transport (or Kdp) system, which catalyzes the hydrolysis of ATP coupled with the electrogenic transport of potassium into the cytoplasm. This subunit binds the periplasmic potassium ions and delivers the ions to the membrane domain of KdpB through an intramembrane tunnel. This Yersinia pseudotuberculosis serotype I (strain IP32953) protein is Potassium-transporting ATPase potassium-binding subunit.